A 177-amino-acid polypeptide reads, in one-letter code: Protein VERNALIZATION 3 (177 aa).

This sequence belongs to the phosphatidylethanolamine-binding protein family. Expressed in leaves but not in shoot apex.

Involved in the regulation of vernalization and of flowering time; this process in essential for flowering in cv. Bd29-1 but seems do not occur in cv. Bd21. This Brachypodium distachyon (Purple false brome) protein is Protein VERNALIZATION 3.